Here is a 480-residue protein sequence, read N- to C-terminus: Aspartyl/glutamyl-tRNA(Asn/Gln) amidotransferase subunit B (480 aa).

It belongs to the GatB/GatE family. GatB subfamily. Heterotrimer of A, B and C subunits.

It catalyses the reaction L-glutamyl-tRNA(Gln) + L-glutamine + ATP + H2O = L-glutaminyl-tRNA(Gln) + L-glutamate + ADP + phosphate + H(+). The catalysed reaction is L-aspartyl-tRNA(Asn) + L-glutamine + ATP + H2O = L-asparaginyl-tRNA(Asn) + L-glutamate + ADP + phosphate + 2 H(+). In terms of biological role, allows the formation of correctly charged Asn-tRNA(Asn) or Gln-tRNA(Gln) through the transamidation of misacylated Asp-tRNA(Asn) or Glu-tRNA(Gln) in organisms which lack either or both of asparaginyl-tRNA or glutaminyl-tRNA synthetases. The reaction takes place in the presence of glutamine and ATP through an activated phospho-Asp-tRNA(Asn) or phospho-Glu-tRNA(Gln). This Streptococcus pneumoniae (strain CGSP14) protein is Aspartyl/glutamyl-tRNA(Asn/Gln) amidotransferase subunit B.